The sequence spans 160 residues: Ribosomal RNA large subunit methyltransferase H (160 aa).

S-adenosyl-L-methionine contacts are provided by residues Leu-76, Gly-108, and 127-132 (LGELTW).

The protein belongs to the RNA methyltransferase RlmH family. As to quaternary structure, homodimer.

The protein localises to the cytoplasm. The catalysed reaction is pseudouridine(1915) in 23S rRNA + S-adenosyl-L-methionine = N(3)-methylpseudouridine(1915) in 23S rRNA + S-adenosyl-L-homocysteine + H(+). Its function is as follows. Specifically methylates the pseudouridine at position 1915 (m3Psi1915) in 23S rRNA. In Brucella anthropi (strain ATCC 49188 / DSM 6882 / CCUG 24695 / JCM 21032 / LMG 3331 / NBRC 15819 / NCTC 12168 / Alc 37) (Ochrobactrum anthropi), this protein is Ribosomal RNA large subunit methyltransferase H.